The primary structure comprises 563 residues: Arginine--tRNA ligase (563 aa).

A 'HIGH' region motif is present at residues 121–131; sequence PNIAKPFSIGH.

It belongs to the class-I aminoacyl-tRNA synthetase family. In terms of assembly, monomer.

It is found in the cytoplasm. The enzyme catalyses tRNA(Arg) + L-arginine + ATP = L-arginyl-tRNA(Arg) + AMP + diphosphate. The chain is Arginine--tRNA ligase (argS) from Streptococcus pneumoniae serotype 4 (strain ATCC BAA-334 / TIGR4).